The primary structure comprises 109 residues: Phycoerythrin alpha-1 subunit (109 aa).

Positions 6, 16, 17, 20, 27, 28, and 39 each coordinate (2R,3E)-phycocyanobilin.

The protein belongs to the phycoerythrin family. In terms of assembly, heterotetramer of 2 identical alpha chains and 2 identical beta chains which form 2 alpha-beta heterodimers within the heterotetramer. The two alpha-beta heterodimers are rotated to an open configuration in contrast to the closed configuration found in other cryptophyte species due to the insertion of a single amino acid, Asp-65, in a conserved region of the alpha chain. In the open form, the central chromophores are not in physical contact but are separated by a water-filled channel. In terms of processing, contains three phycocyanobilin chromophores with binding mediated by both the alpha and beta subunits.

The protein resides in the plastid. The protein localises to the chloroplast thylakoid membrane. Light-harvesting photosynthetic tetrapyrrole chromophore-protein from the phycobiliprotein complex. The chain is Phycoerythrin alpha-1 subunit from Hemiselmis virescens.